Here is a 259-residue protein sequence, read N- to C-terminus: MSETGQRESVRPSPIFLGLLGLTAVGGALAWLAGETVQPLAYAGVFVMVIAGWLVSLCLHEFGHAFTAWRFGDHDVAVRGYLTLDPRRYSHPMLSLGLPMLFIALGGIGLPGAAVYVHTWFMTTARRTLVSLAGPTVNLALAMLLLAATRLLFDPIHAVLWAGVAFLAFLQLTALVLNLLPIPGLDGYAALEPHLRPETQRALAPAKQFALVFLLVLFLAPTLNGWFFGVVYWLFDLSGVSHRLAAAGSVLARFWSIWF.

2 consecutive transmembrane segments (helical) span residues 14–34 (PIFL…WLAG) and 39–59 (PLAY…SLCL). A Zn(2+)-binding site is contributed by H60. E61 is a catalytic residue. H64 contributes to the Zn(2+) binding site. 4 consecutive transmembrane segments (helical) span residues 97-117 (GLPM…AVYV), 128-148 (TLVS…LLAA), 156-176 (IHAV…TALV), and 211-231 (LVFL…FGVV).

Belongs to the peptidase M50B family. It depends on Zn(2+) as a cofactor.

The protein resides in the cell membrane. This chain is Putative zinc metalloprotease Rip2 (rip2), found in Mycobacterium tuberculosis (strain ATCC 25618 / H37Rv).